The primary structure comprises 478 residues: Zinc metalloproteinase/disintegrin (478 aa).

The N-terminal stretch at 1-20 (MIEVLLVTICLAVFPYPGSS) is a signal peptide. Residues 21–190 (IILESGNVDD…KASQLYLTPE (170 aa)) constitute a propeptide that is removed on maturation. Gln-191 is subject to Pyrrolidone carboxylic acid. Residues 197–392 (RYIELAIVVD…SKPQCIINAP (196 aa)) enclose the Peptidase M12B domain. Positions 200 and 284 each coordinate Ca(2+). Cystine bridges form between Cys-308–Cys-387, Cys-349–Cys-371, and Cys-351–Cys-354. Residue His-333 coordinates Zn(2+). Glu-334 is an active-site residue. His-337 and His-343 together coordinate Zn(2+). Ca(2+) contacts are provided by Cys-387 and Asn-390. A propeptide spanning residues 393-410 (LRTDTVSTPVSGNEFLEA) is cleaved from the precursor. The region spanning 400–478 (TPVSGNEFLE…GQSADCPRNS (79 aa)) is the Disintegrin domain. 6 cysteine pairs are disulfide-bonded: Cys-414-Cys-429, Cys-416-Cys-424, Cys-423-Cys-446, Cys-437-Cys-443, Cys-442-Cys-467, and Cys-455-Cys-474. The Cell attachment site motif lies at 459–461 (RGD). The segment at 459–478 (RGDNPDDRCTGQSADCPRNS) is disordered. A compositionally biased stretch (polar residues) spans 468-478 (TGQSADCPRNS).

This sequence belongs to the venom metalloproteinase (M12B) family. P-II subfamily. P-IIa sub-subfamily. Monomer. Requires Zn(2+) as cofactor. In terms of processing, not N-glycosylated. As to expression, expressed by the venom gland.

Its subcellular location is the secreted. It catalyses the reaction Cleavage of 3-Asn-|-Gln-4, 10-His-|-Leu-11 and 14-Ala-|-Leu-15 in the insulin B chain, and the bond Z-Gly-Pro-|-Leu-Gly-Pro in a small molecule substrate of microbial collagenase.. In terms of biological role, zinc protease that induces hemorrhage. Inhibits platelet aggregation induced by ADP, thrombin, and collagen. Acts by inhibiting fibrinogen interaction with platelet receptors GPIIb/GPIIIa (ITGA2B/ITGB3). In Protobothrops flavoviridis (Habu), this protein is Zinc metalloproteinase/disintegrin.